Here is a 363-residue protein sequence, read N- to C-terminus: Flagellar P-ring protein (363 aa).

Residues 1-20 form the signal peptide; it reads MKIKLILACALMVFSAASSA.

Belongs to the FlgI family. As to quaternary structure, the basal body constitutes a major portion of the flagellar organelle and consists of four rings (L,P,S, and M) mounted on a central rod.

It is found in the periplasm. The protein resides in the bacterial flagellum basal body. Assembles around the rod to form the L-ring and probably protects the motor/basal body from shearing forces during rotation. In Shewanella loihica (strain ATCC BAA-1088 / PV-4), this protein is Flagellar P-ring protein.